The following is a 1295-amino-acid chain: Phosphoribosylformylglycinamidine synthase (1295 aa).

The segment at 305–327 (WPGAATGSGGEIRDEGATGRGAK) is disordered. Residues 307 to 318 (GAATGSGGEIRD) and alanine 678 contribute to the ATP site. Mg(2+) contacts are provided by glutamate 718, asparagine 722, and aspartate 884. Position 886 (serine 886) interacts with ATP. A Glutamine amidotransferase type-1 domain is found at 1042-1295 (VAVLREQGVN…IFRNARKQLG (254 aa)). The active-site Nucleophile is cysteine 1135. Active-site residues include histidine 1260 and glutamate 1262.

The protein in the N-terminal section; belongs to the FGAMS family. As to quaternary structure, monomer.

It is found in the cytoplasm. The enzyme catalyses N(2)-formyl-N(1)-(5-phospho-beta-D-ribosyl)glycinamide + L-glutamine + ATP + H2O = 2-formamido-N(1)-(5-O-phospho-beta-D-ribosyl)acetamidine + L-glutamate + ADP + phosphate + H(+). It functions in the pathway purine metabolism; IMP biosynthesis via de novo pathway; 5-amino-1-(5-phospho-D-ribosyl)imidazole from N(2)-formyl-N(1)-(5-phospho-D-ribosyl)glycinamide: step 1/2. Phosphoribosylformylglycinamidine synthase involved in the purines biosynthetic pathway. Catalyzes the ATP-dependent conversion of formylglycinamide ribonucleotide (FGAR) and glutamine to yield formylglycinamidine ribonucleotide (FGAM) and glutamate. This Escherichia coli (strain UTI89 / UPEC) protein is Phosphoribosylformylglycinamidine synthase.